A 334-amino-acid chain; its full sequence is Methionyl-tRNA formyltransferase (334 aa).

(6S)-5,6,7,8-tetrahydrofolate is bound at residue 111-114 (SLLP).

This sequence belongs to the Fmt family.

It catalyses the reaction L-methionyl-tRNA(fMet) + (6R)-10-formyltetrahydrofolate = N-formyl-L-methionyl-tRNA(fMet) + (6S)-5,6,7,8-tetrahydrofolate + H(+). Attaches a formyl group to the free amino group of methionyl-tRNA(fMet). The formyl group appears to play a dual role in the initiator identity of N-formylmethionyl-tRNA by promoting its recognition by IF2 and preventing the misappropriation of this tRNA by the elongation apparatus. This Cyanothece sp. (strain PCC 7425 / ATCC 29141) protein is Methionyl-tRNA formyltransferase.